We begin with the raw amino-acid sequence, 375 residues long: Succinyl-diaminopimelate desuccinylase (375 aa).

Residue His66 participates in Zn(2+) binding. Asp68 is an active-site residue. Asp99 contacts Zn(2+). The Proton acceptor role is filled by Glu133. Residues Glu134, Glu162, and His348 each contribute to the Zn(2+) site.

It belongs to the peptidase M20A family. DapE subfamily. In terms of assembly, homodimer. Zn(2+) serves as cofactor. The cofactor is Co(2+).

The catalysed reaction is N-succinyl-(2S,6S)-2,6-diaminopimelate + H2O = (2S,6S)-2,6-diaminopimelate + succinate. Its pathway is amino-acid biosynthesis; L-lysine biosynthesis via DAP pathway; LL-2,6-diaminopimelate from (S)-tetrahydrodipicolinate (succinylase route): step 3/3. In terms of biological role, catalyzes the hydrolysis of N-succinyl-L,L-diaminopimelic acid (SDAP), forming succinate and LL-2,6-diaminopimelate (DAP), an intermediate involved in the bacterial biosynthesis of lysine and meso-diaminopimelic acid, an essential component of bacterial cell walls. This chain is Succinyl-diaminopimelate desuccinylase, found in Klebsiella pneumoniae (strain 342).